The primary structure comprises 352 residues: Protein RecA (352 aa).

65 to 72 serves as a coordination point for ATP; that stretch reads GPESSGKT.

Belongs to the RecA family.

The protein localises to the cytoplasm. Its function is as follows. Can catalyze the hydrolysis of ATP in the presence of single-stranded DNA, the ATP-dependent uptake of single-stranded DNA by duplex DNA, and the ATP-dependent hybridization of homologous single-stranded DNAs. It interacts with LexA causing its activation and leading to its autocatalytic cleavage. This is Protein RecA from Pseudomonas fluorescens (strain Pf0-1).